Here is a 429-residue protein sequence, read N- to C-terminus: Serum response factor-binding protein 1 (429 aa).

An N-acetylalanine modification is found at Ala-2. 2 coiled-coil regions span residues 42–67 (KGTE…AMKE) and 108–144 (LLKK…EDNH). 2 stretches are compositionally biased toward polar residues: residues 128 to 138 (QNVTEVESSKN) and 146 to 160 (KNTL…NLQR). Disordered regions lie at residues 128–285 (QNVT…GDDF) and 311–429 (EKVF…TFDD). Positions 183–195 (NSKEKIAKMEHGP) are enriched in basic and acidic residues. Lys-190 is covalently cross-linked (Glycyl lysine isopeptide (Lys-Gly) (interchain with G-Cter in SUMO2)). A phosphoserine mark is found at Ser-203, Ser-205, Ser-264, Ser-279, and Ser-281. Residues 249 to 265 (GGEELCEEEKEYFDDST) are compositionally biased toward acidic residues. The span at 311 to 341 (EKVFLKEDTGETHGDTRNDKTKPSTETRKLE) shows a compositional bias: basic and acidic residues. Lys-316 is covalently cross-linked (Glycyl lysine isopeptide (Lys-Gly) (interchain with G-Cter in SUMO2)). Residues Ser-349, Ser-351, and Ser-367 each carry the phosphoserine modification. Basic and acidic residues predominate over residues 357–367 (NFKEQAPKTRS). Polar residues predominate over residues 373 to 383 (NEPQFKNQFNK).

As to quaternary structure, interacts with SRF. Forms complexes with SRF and SRF cofactors ARID2, MYOCD and NKX2-5. Interacts with the N-terminus of SLC2A4.

The protein localises to the cytoplasm. Its subcellular location is the perinuclear region. In terms of biological role, may be involved in regulating transcriptional activation of cardiac genes during the aging process. May play a role in biosynthesis and/or processing of SLC2A4 in adipose cells. This Pongo abelii (Sumatran orangutan) protein is Serum response factor-binding protein 1.